Here is a 1123-residue protein sequence, read N- to C-terminus: Phytochrome A (1123 aa).

Over residues 1-14 (MSSSRPSQSSTTSS) the composition is skewed to low complexity. The tract at residues 1-20 (MSSSRPSQSSTTSSRSKHSA) is disordered. In terms of domain architecture, GAF spans 218–401 (SMERLCDTMV…VFAILVNKEL (184 aa)). C323 lines the phytochromobilin pocket. Residues 617 to 687 (VTAEMVRLIE…KMLELALQGQ (71 aa)) form the PAS 1 domain. In terms of domain architecture, PAC spans 690–746 (RNVEFEIKTHGPSRDSSPISLIVNACASKDVRDSVVGVCFIAQDITGQKSIMDKFTR). Residues 747–821 (IEGDYRAIIQ…KNQEAFVNFG (75 aa)) form the PAS 2 domain. Residues 901 to 1118 (YIRRQIRNPL…TFIISVELAV (218 aa)) form the Histidine kinase domain.

The protein belongs to the phytochrome family. Homodimer. Contains one covalently linked phytochromobilin chromophore.

In terms of biological role, regulatory photoreceptor which exists in two forms that are reversibly interconvertible by light: the Pr form that absorbs maximally in the red region of the spectrum and the Pfr form that absorbs maximally in the far-red region. Photoconversion of Pr to Pfr induces an array of morphogenic responses, whereas reconversion of Pfr to Pr cancels the induction of those responses. Pfr controls the expression of a number of nuclear genes including those encoding the small subunit of ribulose-bisphosphate carboxylase, chlorophyll A/B binding protein, protochlorophyllide reductase, rRNA, etc. It also controls the expression of its own gene(s) in a negative feedback fashion. This is Phytochrome A (PHYA) from Solanum tuberosum (Potato).